A 200-amino-acid polypeptide reads, in one-letter code: Integrin beta-1-binding protein 1 (200 aa).

The segment covering methionine 1–serine 10 has biased composition (basic residues). Residues methionine 1–serine 55 form a disordered region. The Nuclear localization signal signature appears at lysine 6–lysine 7. Residues serine 11–serine 29 are compositionally biased toward low complexity. Residues serine 34–serine 55 are compositionally biased toward polar residues. Phosphothreonine; by CaMK2 is present on threonine 38. Serine 41 carries the phosphoserine modification. Residues aspartate 58–serine 200 enclose the PID domain. An interaction with KRIT1 region spans residues tyrosine 136–isoleucine 139. Residues isoleucine 139 to methionine 141 are interaction with ITGB1.

Found in a complex, at least composed of ITGB1BP1, KRIT1 and RAP1A. Interacts (via C-terminal region) with ITGB1 (via C-terminal cytoplasmic tail); the interaction prevents talin TLN1 binding to ITGB1 and KRIT1 and ITGB1 compete for the same binding site. Interacts with KRIT1 (via N-terminal NPXY motif); the interaction induces the opening conformation of KRIT1 and KRIT1 and ITGB1 compete for the same binding site. Isoform 2 does not interact with ITGB1. Interacts with CDC42 (GTP- or GDP-bound form); the interaction is increased with the CDC42-membrane bound forms and prevents both CDC42 activation and cell spreading. Interacts (via C-terminal domain region) with NME2. Interacts with FERMT2 and RAC1. Interacts (via N-terminus and PTB domain) with ROCK1. Post-translationally, phosphorylation at Thr-38 seems to enhance integrin alpha5beta1-mediated cell adhesion. The degree of phosphorylation is regulated by integrin-dependent cell-matrix interaction. In terms of tissue distribution, expressed in the brain.

It is found in the nucleus. It localises to the cytoplasm. The protein localises to the cytoskeleton. The protein resides in the cell membrane. Its subcellular location is the cell projection. It is found in the lamellipodium. It localises to the ruffle. Key regulator of the integrin-mediated cell-matrix interaction signaling by binding to the ITGB1 cytoplasmic tail and preventing the activation of integrin alpha-5/beta-1 (heterodimer of ITGA5 and ITGB1) by talin or FERMT1. Plays a role in cell proliferation, differentiation, spreading, adhesion and migration in the context of mineralization and bone development and angiogenesis. Stimulates cellular proliferation in a fibronectin-dependent manner. Involved in the regulation of beta-1 integrin-containing focal adhesion (FA) site dynamics by controlling its assembly rate during cell adhesion; inhibits beta-1 integrin clustering within FA by directly competing with talin TLN1, and hence stimulates osteoblast spreading and migration in a fibronectin- and/or collagen-dependent manner. Acts as a guanine nucleotide dissociation inhibitor (GDI) by regulating Rho family GTPases during integrin-mediated cell matrix adhesion; reduces the level of active GTP-bound form of both CDC42 and RAC1 GTPases upon cell adhesion to fibronectin. Stimulates the release of active CDC42 from the membranes to maintain it in an inactive cytoplasmic pool. Participates in the translocation of the Rho-associated protein kinase ROCK1 to membrane ruffles at cell leading edges of the cell membrane, leading to an increase of myoblast cell migration on laminin. Plays a role in bone mineralization at a late stage of osteoblast differentiation; modulates the dynamic formation of focal adhesions into fibrillar adhesions, which are adhesive structures responsible for fibronectin deposition and fibrillogenesis. Plays a role in blood vessel development; acts as a negative regulator of angiogenesis by attenuating endothelial cell proliferation and migration, lumen formation and sprouting angiogenesis by promoting AKT phosphorylation and inhibiting ERK1/2 phosphorylation through activation of the Notch signaling pathway. Promotes transcriptional activity of the MYC promoter. This chain is Integrin beta-1-binding protein 1 (Itgb1bp1), found in Mus musculus (Mouse).